A 187-amino-acid polypeptide reads, in one-letter code: Dihydrofolate reductase (187 aa).

Residues 4-185 form the DHFR domain; the sequence is PLNCIVAVSQ…IKYKFEVYEK (182 aa). The involved in methotrexate binding stretch occupies residues 8–37; it reads IVAVSQNMGIGKNGDFPWPMLRNEFKYFQR. Residues alanine 10 and 16–22 each bind NADP(+); that span reads GIGKNGD. A substrate-binding site is contributed by 31–36; that stretch reads EFKYFQ. Residue lysine 33 is modified to N6-acetyllysine; alternate. Position 33 is an N6-succinyllysine; alternate (lysine 33). 55-57 serves as a coordination point for NADP(+); the sequence is RKT. The tract at residues 60–70 is involved in methotrexate binding; that stretch reads SIPEKNRPLKD. Arginine 71 contributes to the substrate binding site. Residues 77–79 and 117–124 each bind NADP(+); these read SRE and GGSSVYKE. Position 137 (threonine 137) interacts with methotrexate.

This sequence belongs to the dihydrofolate reductase family. As to quaternary structure, homodimer.

The protein resides in the mitochondrion. The protein localises to the cytoplasm. The enzyme catalyses (6S)-5,6,7,8-tetrahydrofolate + NADP(+) = 7,8-dihydrofolate + NADPH + H(+). Its pathway is cofactor biosynthesis; tetrahydrofolate biosynthesis; 5,6,7,8-tetrahydrofolate from 7,8-dihydrofolate: step 1/1. In terms of biological role, key enzyme in folate metabolism. Contributes to the de novo mitochondrial thymidylate biosynthesis pathway. Catalyzes an essential reaction for de novo glycine and purine synthesis, and for DNA precursor synthesis. Binds its own mRNA. The sequence is that of Dihydrofolate reductase (DHFR) from Mesocricetus auratus (Golden hamster).